The sequence spans 175 residues: Respiratory supercomplex factor 1-B, mitochondrial (175 aa).

The HIG1 domain occupies Asp3–Glu94. Transmembrane regions (helical) follow at residues Pro30–Ala46 and Ile66–Tyr83. Residues Tyr83 to Ala115 adopt a coiled-coil conformation.

It belongs to the RCF1 family. As to quaternary structure, associates with the respiratory chain complex III/complex IV supercomplex.

It localises to the mitochondrion membrane. Cytochrome c oxidase subunit which plays a role in assembly of respiratory supercomplexes. The chain is Respiratory supercomplex factor 1-B, mitochondrial (rcf1-B) from Talaromyces marneffei (strain ATCC 18224 / CBS 334.59 / QM 7333) (Penicillium marneffei).